A 366-amino-acid polypeptide reads, in one-letter code: Trans-enoyl reductase caaB (366 aa).

Residues Gly19–Val363 enclose the Enoyl reductase (ER) domain. Position 219 (Tyr219) interacts with NADP(+).

It belongs to the zinc-containing alcohol dehydrogenase family. Monomer.

Its pathway is secondary metabolite biosynthesis. In terms of biological role, trans-enoyl reductase; part of the gene cluster that produces the acyltetronic acid derivatives carlosic acid, agglomerin F and carlosic acid methyl ether. The PKS domains of caaA condenses two malonyl-CoAs into an acetyl starter unit, and form 1,3-diketohexanyl-ACP with the help of the trans-enoyl reductase caaB. Next, the C domain of caaA forms the ester bond between the acyl chain and L-malic acid (derived from the TCA cycle) and accepted by the A domain instead of an amino acid. Finally, the terminal reductase/Dieckmann cyclization (R/DKC) domain cyclizes the intermediate and releases the product as carlosic acid. Decarboxylation of carlosic acid followed by formation of the exocyclic double bond is likely to be catalyzed by the cytochrome P450 monooxygenase caaC. Thus, decarboxylation and oxidation would be coupled (performed by one enzyme) through concomitant abstraction of the hydrogen at C-4. Finally, sequential oxidations of the terminal C-10 methyl group to form carboxylic acid would be catalyzed by the 2-oxoglutarate-dependent dioxygenase caaD, which is required for the biosynthesis of agglomerin F. The protein is Trans-enoyl reductase caaB of Aspergillus niger (strain ATCC MYA-4892 / CBS 513.88 / FGSC A1513).